A 320-amino-acid polypeptide reads, in one-letter code: Probable 5-dehydro-4-deoxyglucarate dehydratase (320 aa).

The protein belongs to the DapA family.

It carries out the reaction 5-dehydro-4-deoxy-D-glucarate + H(+) = 2,5-dioxopentanoate + CO2 + H2O. Its pathway is carbohydrate acid metabolism; D-glucarate degradation; 2,5-dioxopentanoate from D-glucarate: step 2/2. In Streptomyces griseus subsp. griseus (strain JCM 4626 / CBS 651.72 / NBRC 13350 / KCC S-0626 / ISP 5235), this protein is Probable 5-dehydro-4-deoxyglucarate dehydratase.